We begin with the raw amino-acid sequence, 249 residues long: Probable transcriptional regulator ycf27 (249 aa).

The region spanning 13 to 126 is the Response regulatory domain; that stretch reads HLLIVDDENN…ELEARIQSIL (114 aa). Asp-62 carries the post-translational modification 4-aspartylphosphate. Residues 82–100 constitute a DNA-binding region (H-T-H motif); that stretch reads DIPIIMLTALEDVLDKVTG. The ompR/PhoB-type DNA-binding region spans 142–246; sequence INLFKTGSLN…ARGTGYLCRK (105 aa).

The protein localises to the plastid. It is found in the chloroplast. Functionally, probable promoter-specific protein mediating the interaction between DNA and RNA polymerase. This is Probable transcriptional regulator ycf27 (ycf27) from Cyanidium caldarium (Red alga).